Reading from the N-terminus, the 866-residue chain is MTETRTTCPYCGVGCGVIASRAPHGQVSVRGDEQHPANFGRLCVKGAALGETVGLEGRMLFPEVDGERATWPQALAAAGSRLREIIDRHGPQAVAFYASGQLLTEDYYAANKLMKGFIGAANIDTNSRLCMSSAVTGYKRALGADVVPCSYEDVENSDLVVLVGSNAAWAHPVLYQRLAQAKRDNPQMRVVVIDPRRTATCDIADRHLALAPGSDGGLFVGLLNAIAASGAISDDFNDAQRALTIAQDWDLDKVAQFCGLPRQQIADFYREFIAAPRAITLYTMGINQSASGSDKCNAIINVHLACGKYGRPGCGPFSLTGQPNAMGGREVGGLATMLAAHMNFEPDDLRRLARFWGSERLAQTPGLTGVELFAAIGRGEVKAVWIMGTNPVVSLPDSHAVSEALARCPLVIISDVVADTDTGRFAHIRFPALAWGEKSGTVTNSERRISRQRAFMPPPGEARADWWIVARVAEALGFGSAFAWQHPHEVFSEHAALSGYENDGQRAFDIGGLADLSREAWDALEPVRWPVSRSEAAWSVHKGWHRDGKLRMVPVAPQPTRATTDAFYPLILNSGRIRDQWHTMTRTGAVPRLMQHINEPVVEVAPADAQRYHLLEGELARVRSPKGVMVAKVTIGDGQRPGSLFVPMHWNNQFARQGRVNNLLAAVTDPHSGQPESKQTAVAIATWLPAWKGELFSRQPVPLPASLHWRRRAAQGIIHLSLAGDTRSRDWLVEWCQRQGWQMQVAEGGKVWNLLAWRAGELMLGWWSDASEPAIDADWIHAAFRVPPQNAARRHALLSGRKGGVEMPRGRIICSCFSVGERAIGEAIAGGCRTPGALGGKLKCGTNCGSCIPELKALLAAKLAQA.

In terms of domain architecture, 4Fe-4S Mo/W bis-MGD-type spans 1–57 (MTETRTTCPYCGVGCGVIASRAPHGQVSVRGDEQHPANFGRLCVKGAALGETVGLEG). Positions 8, 11, 15, and 43 each coordinate [4Fe-4S] cluster.

Belongs to the prokaryotic molybdopterin-containing oxidoreductase family. NasA/NapA/NarB subfamily. The cofactor is [4Fe-4S] cluster. Mo-bis(molybdopterin guanine dinucleotide) serves as cofactor.

It participates in nitrogen metabolism; nitrate reduction (denitrification); dinitrogen from nitrate: step 1/4. Functionally, nitrate reductase is a key enzyme involved in the first step of nitrate assimilation in plants, fungi and bacteria. This chain is Nitrate reductase (nasA), found in Klebsiella oxytoca.